We begin with the raw amino-acid sequence, 370 residues long: Queuine tRNA-ribosyltransferase (370 aa).

The active-site Proton acceptor is Asp89. Substrate-binding positions include 89–93, Asp143, Gln185, and Gly212; that span reads DSGGF. The segment at 243–249 is RNA binding; that stretch reads GVGTPED. Residue Asp262 is the Nucleophile of the active site. Positions 267–271 are RNA binding; important for wobble base 34 recognition; the sequence is TRNAR. 4 residues coordinate Zn(2+): Cys300, Cys302, Cys305, and His331.

Belongs to the queuine tRNA-ribosyltransferase family. As to quaternary structure, homodimer. Within each dimer, one monomer is responsible for RNA recognition and catalysis, while the other monomer binds to the replacement base PreQ1. It depends on Zn(2+) as a cofactor.

The catalysed reaction is 7-aminomethyl-7-carbaguanine + guanosine(34) in tRNA = 7-aminomethyl-7-carbaguanosine(34) in tRNA + guanine. It functions in the pathway tRNA modification; tRNA-queuosine biosynthesis. Its function is as follows. Catalyzes the base-exchange of a guanine (G) residue with the queuine precursor 7-aminomethyl-7-deazaguanine (PreQ1) at position 34 (anticodon wobble position) in tRNAs with GU(N) anticodons (tRNA-Asp, -Asn, -His and -Tyr). Catalysis occurs through a double-displacement mechanism. The nucleophile active site attacks the C1' of nucleotide 34 to detach the guanine base from the RNA, forming a covalent enzyme-RNA intermediate. The proton acceptor active site deprotonates the incoming PreQ1, allowing a nucleophilic attack on the C1' of the ribose to form the product. After dissociation, two additional enzymatic reactions on the tRNA convert PreQ1 to queuine (Q), resulting in the hypermodified nucleoside queuosine (7-(((4,5-cis-dihydroxy-2-cyclopenten-1-yl)amino)methyl)-7-deazaguanosine). The polypeptide is Queuine tRNA-ribosyltransferase (Methylobacillus flagellatus (strain ATCC 51484 / DSM 6875 / VKM B-1610 / KT)).